The chain runs to 283 residues: MIVCTTISDLQAQLRIEREQKRSVGFVPTMGYLHEGHLSLVKRAKEEHDTVVMSIFVNPLQFGAGEDLDTYPRDFARDEQLAEAEGVDILFYPSTDEMYPRPASVRLKVTQGVDVLCGASRPGHFDGVVTVVLKLFHLVEPDAAYFGLKDAQQVAVITNMVEDLNVGVQIVPCATVREVDGLAKSSRNVRLSEKERKEAPGLYQSLLAGREALDAGEKDAAVIRERIRQSLEERLTGRIDYVEVLSYPRLQKIERIEETVILAVAYQFENARLIDNLIVPYGE.

Position 30–37 (30–37 (MGYLHEGH)) interacts with ATP. Catalysis depends on histidine 37, which acts as the Proton donor. (R)-pantoate is bound at residue glutamine 61. Glutamine 61 serves as a coordination point for beta-alanine. 147-150 (GLKD) contacts ATP. A (R)-pantoate-binding site is contributed by glutamine 153. ATP contacts are provided by residues valine 176 and 184–187 (KSSR).

Belongs to the pantothenate synthetase family. As to quaternary structure, homodimer.

The protein resides in the cytoplasm. It carries out the reaction (R)-pantoate + beta-alanine + ATP = (R)-pantothenate + AMP + diphosphate + H(+). The protein operates within cofactor biosynthesis; (R)-pantothenate biosynthesis; (R)-pantothenate from (R)-pantoate and beta-alanine: step 1/1. In terms of biological role, catalyzes the condensation of pantoate with beta-alanine in an ATP-dependent reaction via a pantoyl-adenylate intermediate. This is Pantothenate synthetase from Halalkalibacterium halodurans (strain ATCC BAA-125 / DSM 18197 / FERM 7344 / JCM 9153 / C-125) (Bacillus halodurans).